Here is a 236-residue protein sequence, read N- to C-terminus: ATP synthase subunit 4, mitochondrial (236 aa).

The transit peptide at 1–29 (MAFRALTTKAAARPLLALGPRSVAMGARY) directs the protein to the mitochondrion.

Belongs to the eukaryotic ATPase subunit B family. In terms of assembly, F-type ATPases have 2 components, CF(1) - the catalytic core - and CF(0) - the membrane proton channel. In yeast, the dimeric form of ATP synthase consists of 17 polypeptides: alpha, beta, gamma, delta, epsilon, 4 (B), 5 (OSCP), 6 (A), 8, 9 (C), d, E (Tim11), f, g, h, i/j and k.

The protein localises to the mitochondrion. The protein resides in the mitochondrion inner membrane. In terms of biological role, mitochondrial membrane ATP synthase (F(1)F(0) ATP synthase or Complex V) produces ATP from ADP in the presence of a proton gradient across the membrane which is generated by electron transport complexes of the respiratory chain. F-type ATPases consist of two structural domains, F(1) - containing the extramembraneous catalytic core, and F(0) - containing the membrane proton channel, linked together by a central stalk and a peripheral stalk. During catalysis, ATP synthesis in the catalytic domain of F(1) is coupled via a rotary mechanism of the central stalk subunits to proton translocation. Part of the complex F(0) domain and the peripheric stalk, which acts as a stator to hold the catalytic alpha(3)beta(3) subcomplex and subunit a/ATP6 static relative to the rotary elements. This chain is ATP synthase subunit 4, mitochondrial (ATP4), found in Eremothecium gossypii (strain ATCC 10895 / CBS 109.51 / FGSC 9923 / NRRL Y-1056) (Yeast).